We begin with the raw amino-acid sequence, 141 residues long: Nucleoside diphosphate kinase (141 aa).

Residues Lys-11, Phe-59, Arg-87, Thr-93, Arg-104, and Asn-114 each coordinate ATP. His-117 (pros-phosphohistidine intermediate) is an active-site residue.

It belongs to the NDK family. As to quaternary structure, homotetramer. Requires Mg(2+) as cofactor.

It is found in the cytoplasm. The enzyme catalyses a 2'-deoxyribonucleoside 5'-diphosphate + ATP = a 2'-deoxyribonucleoside 5'-triphosphate + ADP. It carries out the reaction a ribonucleoside 5'-diphosphate + ATP = a ribonucleoside 5'-triphosphate + ADP. Functionally, major role in the synthesis of nucleoside triphosphates other than ATP. The ATP gamma phosphate is transferred to the NDP beta phosphate via a ping-pong mechanism, using a phosphorylated active-site intermediate. The sequence is that of Nucleoside diphosphate kinase from Acidovorax sp. (strain JS42).